A 730-amino-acid chain; its full sequence is Stonin-1 (730 aa).

3 disordered regions span residues 1–26, 38–83, and 132–159; these read MYST…KRKD, NGLK…PLST, and SPHV…AGPQ. 2 stretches are compositionally biased toward low complexity: residues 54–65 and 132–143; these read PSSASSTPLSSP and SPHVSLPSSHSH. The SHD domain occupies 269–402; it reads GWSFMLRIPE…KLPATAKPKN (134 aa). The region spanning 407-710 is the MHD domain; that stretch reads EQEICLDIQD…ACYNIQVEIE (304 aa).

Belongs to the Stoned B family.

It localises to the cytoplasm. The protein resides in the membrane. Its function is as follows. May be involved in the endocytic machinery. The polypeptide is Stonin-1 (Ston1) (Mus musculus (Mouse)).